The chain runs to 200 residues: Outer-membrane lipoprotein carrier protein (200 aa).

Positions 1 to 18 (MKAVVFAMVMAVSFNVFA) are cleaved as a signal peptide.

It belongs to the LolA family. As to quaternary structure, monomer.

The protein resides in the periplasm. Its function is as follows. Participates in the translocation of lipoproteins from the inner membrane to the outer membrane. Only forms a complex with a lipoprotein if the residue after the N-terminal Cys is not an aspartate (The Asp acts as a targeting signal to indicate that the lipoprotein should stay in the inner membrane). This is Outer-membrane lipoprotein carrier protein from Idiomarina loihiensis (strain ATCC BAA-735 / DSM 15497 / L2-TR).